The sequence spans 593 residues: Protein GAMETE EXPRESSED 1 (593 aa).

The N-terminal stretch at 1–24 (MDRFSRKCLLFLLLIILLDSPLTC) is a signal peptide. The Extracellular segment spans residues 25 to 427 (HSWGWFSSSS…LHNAMLLESR (403 aa)). Coiled-coil stretches lie at residues 156–194 (CQQL…SKSD) and 350–387 (EALQ…HDHL). The chain crosses the membrane as a helical span at residues 428 to 448 (VIKAFVIYFLSIFVIYMFTST). Over 449 to 457 (KQTYIIRPR) the chain is Cytoplasmic. Residues 458 to 476 (LYIGLCVTLALEVASLRYV) traverse the membrane as a helical segment. Topologically, residues 477–485 (NDTERQAWM) are extracellular. A helical membrane pass occupies residues 486–506 (INLIRSLFALLASAQLLHAAL). Residues 507–593 (SYRDYEVLNH…TRRLYNFRPR (87 aa)) are Cytoplasmic-facing.

As to quaternary structure, homodimer. As to expression, in tricellular pollen, expressed in mature sperm cells. Not expressed in bicellular or unicellular pollen. Detected in ovules, roots and guard cells. Expressed in the embryo sac before cellularization, in the egg cell after cellularization, in the zygote/embryo immediately after fertilization and in the pollen vegetative cell.

The protein localises to the cell membrane. Its function is as follows. Has a dual function during gametophyte development and early embryogenesis. Required for correct pollen maturation. This Arabidopsis thaliana (Mouse-ear cress) protein is Protein GAMETE EXPRESSED 1 (GEX1).